The following is a 213-amino-acid chain: Pyridoxine/pyridoxamine 5'-phosphate oxidase (213 aa).

Residues 9–12 (RKDY) and Lys-67 each bind substrate. FMN is bound by residues 62 to 67 (RIVLLK), 77 to 78 (FT), Arg-83, Lys-84, and Gln-106. Tyr-124, Arg-128, and Ser-132 together coordinate substrate. FMN-binding positions include 141-142 (QS) and Trp-186. 192-194 (RLH) serves as a coordination point for substrate. Position 196 (Arg-196) interacts with FMN.

The protein belongs to the pyridoxamine 5'-phosphate oxidase family. In terms of assembly, homodimer. It depends on FMN as a cofactor.

The enzyme catalyses pyridoxamine 5'-phosphate + O2 + H2O = pyridoxal 5'-phosphate + H2O2 + NH4(+). It catalyses the reaction pyridoxine 5'-phosphate + O2 = pyridoxal 5'-phosphate + H2O2. It participates in cofactor metabolism; pyridoxal 5'-phosphate salvage; pyridoxal 5'-phosphate from pyridoxamine 5'-phosphate: step 1/1. The protein operates within cofactor metabolism; pyridoxal 5'-phosphate salvage; pyridoxal 5'-phosphate from pyridoxine 5'-phosphate: step 1/1. Catalyzes the oxidation of either pyridoxine 5'-phosphate (PNP) or pyridoxamine 5'-phosphate (PMP) into pyridoxal 5'-phosphate (PLP). The chain is Pyridoxine/pyridoxamine 5'-phosphate oxidase from Cyanothece sp. (strain PCC 7425 / ATCC 29141).